Consider the following 466-residue polypeptide: Coagulation factor VII (466 aa).

The first 20 residues, 1–20 (MVSQALRLLCLLLGLQGCLA), serve as a signal peptide directing secretion. Residues 21-60 (AGGVAEASGGETRDXXWKPGPHRVFITQEEAHGVLHRRRR) constitute a propeptide that is removed on maturation. A Gla domain is found at 61 to 105 (ANAFLEELRPGSLERECKEEQCSFEEAREIFKDLERTKLFWISYS). 4-carboxyglutamate occurs at positions 66, 67, 74, 76, 79, 80, 85, 86, 89, and 95. A disulfide bridge links cysteine 77 with cysteine 82. The 37-residue stretch at 106-142 (DGDQCASSPCQNGGSCKDQLQSYICFCLPAFEGRNCE) folds into the EGF-like 1; calcium-binding domain. 10 disulfides stabilise this stretch: cysteine 110/cysteine 121, cysteine 115/cysteine 130, cysteine 132/cysteine 141, cysteine 151/cysteine 162, cysteine 158/cysteine 172, cysteine 174/cysteine 187, cysteine 195/cysteine 322, cysteine 219/cysteine 224, cysteine 238/cysteine 254, and cysteine 370/cysteine 389. O-linked (Glc...) serine; alternate glycosylation occurs at serine 112. Serine 112 is a glycosylation site (O-linked (Xyl...) serine; alternate). A glycan (O-linked (Fuc) serine) is linked at serine 120. The residue at position 123 (aspartate 123) is a (3R)-3-hydroxyaspartate. An EGF-like 2 domain is found at 147 to 188 (DQLICVNENGGCEQYCSDHTGTKRSCRCHEGYSLLADGVSCT). A glycan (N-linked (GlcNAc...) asparagine) is linked at asparagine 205. The region spanning 213-452 (IVGGKVCPKG…YIEWLQKLMR (240 aa)) is the Peptidase S1 domain. Active-site charge relay system residues include histidine 253 and aspartate 302. Residue asparagine 382 is glycosylated (N-linked (GlcNAc...) asparagine). Aspartate 398 serves as a coordination point for substrate. A disulfide bond links cysteine 400 and cysteine 428. The active-site Charge relay system is the serine 404.

Belongs to the peptidase S1 family. As to quaternary structure, heterodimer of a light chain and a heavy chain linked by a disulfide bond. Post-translationally, the vitamin K-dependent, enzymatic carboxylation of some glutamate residues allows the modified protein to bind calcium. In terms of processing, the iron and 2-oxoglutarate dependent 3-hydroxylation of aspartate and asparagine is (R) stereospecific within EGF domains. O-glycosylated. O-fucosylated by POFUT1 on a conserved serine or threonine residue found in the consensus sequence C2-X(4,5)-[S/T]-C3 of EGF domains, where C2 and C3 are the second and third conserved cysteines. Post-translationally, can be either O-glucosylated or O-xylosylated at Ser-112 by POGLUT1.

It is found in the secreted. It catalyses the reaction Selective cleavage of Arg-|-Ile bond in factor X to form factor Xa.. In terms of biological role, initiates the extrinsic pathway of blood coagulation. Serine protease that circulates in the blood in a zymogen form. Factor VII is converted to factor VIIa by factor Xa, factor XIIa, factor IXa, or thrombin by minor proteolysis. In the presence of tissue factor and calcium ions, factor VIIa then converts factor X to factor Xa by limited proteolysis. Factor VIIa also converts factor IX to factor IXa in the presence of tissue factor and calcium. This Pan troglodytes (Chimpanzee) protein is Coagulation factor VII (F7).